The chain runs to 396 residues: Tryptophan synthase beta chain (396 aa).

Lysine 86 is modified (N6-(pyridoxal phosphate)lysine).

This sequence belongs to the TrpB family. As to quaternary structure, tetramer of two alpha and two beta chains. The cofactor is pyridoxal 5'-phosphate.

The catalysed reaction is (1S,2R)-1-C-(indol-3-yl)glycerol 3-phosphate + L-serine = D-glyceraldehyde 3-phosphate + L-tryptophan + H2O. It functions in the pathway amino-acid biosynthesis; L-tryptophan biosynthesis; L-tryptophan from chorismate: step 5/5. Functionally, the beta subunit is responsible for the synthesis of L-tryptophan from indole and L-serine. The protein is Tryptophan synthase beta chain of Pectobacterium carotovorum subsp. carotovorum (strain PC1).